The chain runs to 323 residues: Caspase-1 (323 aa).

The propeptide occupies 1–33; it reads MTDECVTRNYGVGIRSPNGSENRGSFIMADNTD. Active-site residues include His-154 and Cys-196. The propeptide occupies 203–215; the sequence is GGITLEKGVTETD.

The protein belongs to the peptidase C14A family. In terms of assembly, heterotetramer that consists of two anti-parallel arranged heterodimers, each one formed by a 22 kDa (p22) and a 13 kDa (p13) subunit.

Its function is as follows. Involved in the activation cascade of caspases responsible for apoptosis execution. Proteolytically cleaves poly(ADP-ribose) polymerase (PARP). Loss of zygotic DCP-1 function causes larval lethality and melanotic tumors. The protein is Caspase-1 (Dcp-1) of Drosophila melanogaster (Fruit fly).